The primary structure comprises 444 residues: Type VII secretion system protein EssB (444 aa).

Topologically, residues 1–229 (MVKNHNPKNE…RKVGHTVFKW (229 aa)) are cytoplasmic. Residues 230-250 (VAIGMTTLSVLLIAFLAFLYF) form a helical membrane-spanning segment. Residues 251–444 (SVMKHNERIE…EKRQEAERKK (194 aa)) lie on the Extracellular side of the membrane. The tract at residues 366 to 444 (KNNGDLSNDK…EKRQEAERKK (79 aa)) is disordered. Over residues 372–444 (SNDKRSEETK…EKRQEAERKK (73 aa)) the composition is skewed to basic and acidic residues. Residues 387-443 (LQDILDKEKQVKDEKAKSEEEKAKAKDEKLKQQEENEKKQKEQAQKDKEKRQEAERK) are a coiled coil.

Belongs to the EssB family. As to quaternary structure, may oligomerize and interact with other membrane components to form the Ess system. Interacts with EsaA.

Its subcellular location is the cell membrane. Its function is as follows. Component of the type VII secretion system (Ess). Required for the secretion of EsxA and proper accumulation of EssB and EssD. The sequence is that of Type VII secretion system protein EssB from Staphylococcus aureus (strain USA300).